The chain runs to 122 residues: MVQMQTYLTVADNTGGKIAQCIKVLGGSKRRYAKVGDIIVIAVKQAIPNSPVKKGDVHKAVIIRTSKEIRRKNGTYVRFDDNACVILDANLNPRGKRVFGPVARELRDANFMKVVSLASEVI.

It belongs to the universal ribosomal protein uL14 family. As to quaternary structure, part of the 50S ribosomal subunit. Forms a cluster with proteins L3 and L19. In the 70S ribosome, L14 and L19 interact and together make contacts with the 16S rRNA in bridges B5 and B8.

Binds to 23S rRNA. Forms part of two intersubunit bridges in the 70S ribosome. The chain is Large ribosomal subunit protein uL14 from Borrelia recurrentis (strain A1).